Consider the following 303-residue polypeptide: Nod factor export ATP-binding protein I (303 aa).

Residues 5 to 235 (LQMRNVRKLY…EIGCDVVEVY (231 aa)) form the ABC transporter domain. 37–44 (GPNGAGKT) is an ATP binding site.

This sequence belongs to the ABC transporter superfamily. Lipooligosaccharide exporter (TC 3.A.1.102) family. The complex is composed of two ATP-binding proteins (NodI) and two transmembrane proteins (NodJ).

Its subcellular location is the cell inner membrane. Functionally, part of the ABC transporter complex NodIJ involved in the export of the nodulation factors (Nod factors), the bacterial signal molecules that induce symbiosis and subsequent nodulation induction. Nod factors are LCO (lipo-chitin oligosaccharide), a modified beta-1,4-linked N-acetylglucosamine oligosaccharide. This subunit is responsible for energy coupling to the transport system. The chain is Nod factor export ATP-binding protein I from Cupriavidus metallidurans (strain ATCC 43123 / DSM 2839 / NBRC 102507 / CH34) (Ralstonia metallidurans).